The sequence spans 243 residues: HTH-type quorum sensing-dependent transcriptional regulator RpaR (243 aa).

The region spanning 174–239 (KPIRRNRLTP…AAVAKALTLG (66 aa)) is the HTH luxR-type domain. Residues 198–217 (AWEISVILCITERTVKFHLI) constitute a DNA-binding region (H-T-H motif).

The protein belongs to the autoinducer-regulated transcriptional regulatory protein family.

Functionally, responds to the quorum-sensing autoinducer 4-coumaroyl-homoserine lactone to regulate expression of several genes. Represses expression of rpaI in the absence of the inducer. The protein is HTH-type quorum sensing-dependent transcriptional regulator RpaR of Rhodopseudomonas palustris (strain ATCC BAA-98 / CGA009).